Here is a 1574-residue protein sequence, read N- to C-terminus: Centrosomal protein of 170 kDa protein B (1574 aa).

The 51-residue stretch at 23–73 (IFVGRDECELMLQSRSVDKQHAVINYDQDRDEHWVKDLGSLNGTFVNDVRI) folds into the FHA domain. Disordered stretches follow at residues 121 to 258 (VSVK…GVGG), 316 to 395 (DWLV…RDPQ), and 409 to 578 (FDGD…QDQE). 3 stretches are compositionally biased toward basic and acidic residues: residues 147 to 157 (RPEKGDRRHGA), 182 to 197 (SEDRHQEEPYSERPKD), and 325 to 344 (LLRRDGPGDDRHSTKSDLPV). At Ser360 the chain carries Phosphoserine. Residues 370-382 (ASVSGASAEASGE) show a composition bias toward low complexity. At Ser421 the chain carries Phosphoserine. A compositionally biased stretch (basic and acidic residues) spans 430–446 (PKADKRRGPGTSDRDRP). A compositionally biased stretch (polar residues) spans 452–463 (ATGSSSGPQRAS). Basic and acidic residues predominate over residues 465–474 (LKREKTEERL). Polar residues predominate over residues 475-488 (GNTSPVPRASTRSF). Phosphoserine is present on residues Ser478 and Ser490. A compositionally biased stretch (pro residues) spans 518 to 528 (EKTPPVLPAPL). Phosphoserine is present on Ser534. A phosphothreonine mark is found at Thr540 and Thr541. Residues Ser595, Ser617, Ser653, Ser709, Ser744, Ser746, Ser749, Ser751, Ser819, and Ser843 each carry the phosphoserine modification. 6 disordered regions span residues 637–826 (PGMA…RDGL), 839–882 (RSGR…HISS), 924–1300 (SKSA…DPYG), 1333–1358 (AGDGDSLGSPGPTRSPSLGNVPNTPA), 1377–1407 (NFQKVPPGSMNSHNLDQNMNDSRDDALTNKT), and 1510–1535 (NRAPSGSGQPGLGKARPAAQSSTSPA). Positions 857-867 (FARQESFTKEP) are enriched in polar residues. Ser947 carries the phosphoserine modification. Residues 950–959 (DTASTISLLS) are compositionally biased toward polar residues. Phosphoserine occurs at positions 965 and 981. Positions 996-1005 (ARERMSERQH) are enriched in basic and acidic residues. A compositionally biased stretch (polar residues) spans 1084–1102 (RSSATAQKVQQALTRSNSL). Ser1122 bears the Phosphoserine mark. The span at 1134-1146 (AANPEPANRAAPE) shows a compositional bias: low complexity. A phosphoserine mark is found at Ser1166 and Ser1186. Residues 1199–1213 (AEARAAAKKAAATAA) are compositionally biased toward low complexity. The segment covering 1265 to 1282 (HASTATQTPRGSSSTRAR) has biased composition (polar residues). Thr1289 carries the post-translational modification Phosphothreonine. Position 1341 is a phosphoserine (Ser1341). Polar residues-rich tracts occupy residues 1344-1358 (PTRSPSLGNVPNTPA) and 1385-1396 (SMNSHNLDQNMN). At Thr1345 the chain carries Phosphothreonine. Ser1347 is subject to Phosphoserine. Ser1530 and Ser1533 each carry phosphoserine.

This sequence belongs to the CEP170 family.

It is found in the cytoplasm. The protein localises to the cytoskeleton. Functionally, plays a role in microtubule organization. The protein is Centrosomal protein of 170 kDa protein B (Cep170b) of Mus musculus (Mouse).